We begin with the raw amino-acid sequence, 258 residues long: Aspartate/glutamate leucyltransferase (258 aa).

The protein belongs to the R-transferase family. Bpt subfamily.

It is found in the cytoplasm. It catalyses the reaction N-terminal L-glutamyl-[protein] + L-leucyl-tRNA(Leu) = N-terminal L-leucyl-L-glutamyl-[protein] + tRNA(Leu) + H(+). It carries out the reaction N-terminal L-aspartyl-[protein] + L-leucyl-tRNA(Leu) = N-terminal L-leucyl-L-aspartyl-[protein] + tRNA(Leu) + H(+). Its function is as follows. Functions in the N-end rule pathway of protein degradation where it conjugates Leu from its aminoacyl-tRNA to the N-termini of proteins containing an N-terminal aspartate or glutamate. This Rhodopseudomonas palustris (strain BisB18) protein is Aspartate/glutamate leucyltransferase.